The sequence spans 321 residues: Cytochrome c biogenesis protein CcsA (321 aa).

7 helical membrane-spanning segments follow: residues 9–29 (ILTHISFSTISIVITIHLITL), 44–64 (GMIATFFSITGFLVSRWVSSG), 68–88 (LSNLYESLIFLSWTLYILHTI), 143–163 (MLLSYATLLCGSLLSAALLII), 225–245 (VISLGFTLLTVGILCGAVWAN), 259–273 (TWAFITWTIFAIYLH), and 288–308 (VASIGFLIIWICYFGINLLGI).

Belongs to the CcmF/CycK/Ccl1/NrfE/CcsA family. As to quaternary structure, may interact with Ccs1.

The protein localises to the plastid. Its subcellular location is the chloroplast thylakoid membrane. Required during biogenesis of c-type cytochromes (cytochrome c6 and cytochrome f) at the step of heme attachment. In Zea mays (Maize), this protein is Cytochrome c biogenesis protein CcsA.